We begin with the raw amino-acid sequence, 282 residues long: Shikimate dehydrogenase (NADP(+)) (282 aa).

Shikimate-binding positions include 15-17 and threonine 62; that span reads SKS. Catalysis depends on lysine 66, which acts as the Proton acceptor. Asparagine 87 and aspartate 103 together coordinate shikimate. NADP(+)-binding positions include 127 to 131, 151 to 156, and methionine 220; these read GAGGA and NRTHTK. Tyrosine 222 contacts shikimate. Glycine 244 contributes to the NADP(+) binding site.

This sequence belongs to the shikimate dehydrogenase family. As to quaternary structure, homodimer.

The catalysed reaction is shikimate + NADP(+) = 3-dehydroshikimate + NADPH + H(+). The protein operates within metabolic intermediate biosynthesis; chorismate biosynthesis; chorismate from D-erythrose 4-phosphate and phosphoenolpyruvate: step 4/7. Involved in the biosynthesis of the chorismate, which leads to the biosynthesis of aromatic amino acids. Catalyzes the reversible NADPH linked reduction of 3-dehydroshikimate (DHSA) to yield shikimate (SA). This Shewanella baltica (strain OS155 / ATCC BAA-1091) protein is Shikimate dehydrogenase (NADP(+)).